A 198-amino-acid polypeptide reads, in one-letter code: Small ribosomal subunit protein eS1 (198 aa).

It belongs to the eukaryotic ribosomal protein eS1 family.

The polypeptide is Small ribosomal subunit protein eS1 (Nanoarchaeum equitans (strain Kin4-M)).